The chain runs to 96 residues: Small ribosomal subunit protein bS6c (96 aa).

Belongs to the bacterial ribosomal protein bS6 family.

The protein localises to the plastid. The protein resides in the chloroplast. Functionally, binds together with bS18 to 16S ribosomal RNA. In Trieres chinensis (Marine centric diatom), this protein is Small ribosomal subunit protein bS6c (rps6).